A 256-amino-acid chain; its full sequence is Probable tRNA(His) guanylyltransferase (256 aa).

3 residues coordinate Mg(2+): D29, G30, and D76. Residues 29-34 (DGRSFH) and 75-76 (SD) contribute to the GTP site.

This sequence belongs to the tRNA(His) guanylyltransferase family. Mg(2+) serves as cofactor.

Its subcellular location is the cytoplasm. It catalyses the reaction a 5'-end ribonucleotide-tRNA(His) + GTP + ATP + H2O = a 5'-end phospho-guanosine-ribonucleotide-tRNA(His) + AMP + 2 diphosphate + H(+). In terms of biological role, adds a GMP to the 5'-end of tRNA(His) after transcription and RNase P cleavage. This Dictyostelium discoideum (Social amoeba) protein is Probable tRNA(His) guanylyltransferase (thg1).